A 360-amino-acid chain; its full sequence is Nucleoporin SEH1 (360 aa).

WD repeat units follow at residues 10–49 (DHKD…DWHC), 55–96 (THSG…SNDK), 111–152 (DSRT…NLSQ), 160–210 (SCKL…RKYA), 217–258 (TVTD…KELT), and 276–315 (NHNS…NWKC). A Glycyl lysine isopeptide (Lys-Gly) (interchain with G-Cter in SUMO2) cross-link involves residue Lys-12. Phosphoserine is present on residues Ser-179 and Ser-190. The span at 324 to 354 (SPVNGSSQQGTSNPSLGSTIPSLQNSLNGSS) shows a compositional bias: polar residues. The disordered stretch occupies residues 324 to 360 (SPVNGSSQQGTSNPSLGSTIPSLQNSLNGSSAGRKHS).

This sequence belongs to the WD repeat SEC13 family. As to quaternary structure, component of the Nup107-160 subcomplex of the nuclear pore complex (NPC). The Nup107-160 subcomplex includes NUP160, NUP133, NUP107, NUP98, NUP85, NUP43, NUP37, SEH1 and SEC13. The SEH1 subunit appears to be only weakly associated with the Nup107-160 subcomplex. Component of the GATOR2 subcomplex, composed of MIOS, SEC13, SEH1L, WDR24 and WDR59. The GATOR2 complex interacts with CASTOR1 and CASTOR2; the interaction is negatively regulated by arginine. The GATOR2 complex interacts with SESN1, SESN2 and SESN3; the interaction is negatively regulated by amino acids. SESN1, SESN2 and SESN3 convey leucine availability via direct interaction with SEH1L and WDR24.

It localises to the chromosome. The protein resides in the centromere. The protein localises to the kinetochore. It is found in the nucleus. Its subcellular location is the nuclear pore complex. It localises to the lysosome membrane. The GATOR2 complex is negatively regulated by the upstream amino acid sensors CASTOR1 and SESN2, which sequester the GATOR2 complex in absence of amino acids. In the presence of abundant amino acids, GATOR2 is released from CASTOR1 and SESN2 and activated. In terms of biological role, component of the Nup107-160 subcomplex of the nuclear pore complex (NPC). The Nup107-160 subcomplex is required for the assembly of a functional NPC. The Nup107-160 subcomplex is also required for normal kinetochore microtubule attachment, mitotic progression and chromosome segregation. This subunit plays a role in recruitment of the Nup107-160 subcomplex to the kinetochore. As a component of the GATOR2 complex, functions as an activator of the amino acid-sensing branch of the mTORC1 signaling pathway. The GATOR2 complex indirectly activates mTORC1 through the inhibition of the GATOR1 subcomplex. GATOR2 probably acts as an E3 ubiquitin-protein ligase toward GATOR1. In the presence of abundant amino acids, the GATOR2 complex mediates ubiquitination of the NPRL2 core component of the GATOR1 complex, leading to GATOR1 inactivation. In the absence of amino acids, GATOR2 is inhibited, activating the GATOR1 complex. Within the GATOR2 complex, SEC13 and SEH1L are required to stabilize the complex. The sequence is that of Nucleoporin SEH1 (SEH1L) from Homo sapiens (Human).